A 536-amino-acid polypeptide reads, in one-letter code: CTP synthase (536 aa).

The tract at residues 1–267 (MTKFIFVTGG…DDIVIKRLQL (267 aa)) is amidoligase domain. Serine 13 is a CTP binding site. A UTP-binding site is contributed by serine 13. 14-19 (SLGKGI) serves as a coordination point for ATP. An L-glutamine-binding site is contributed by tyrosine 54. ATP is bound at residue aspartate 71. 2 residues coordinate Mg(2+): aspartate 71 and glutamate 141. CTP contacts are provided by residues 148-150 (DIE), 188-193 (KTKPTQ), and lysine 224. Residues 188–193 (KTKPTQ) and lysine 224 contribute to the UTP site. 240-242 (RDA) serves as a coordination point for ATP. A Glutamine amidotransferase type-1 domain is found at 293–535 (TIGLVGKYVS…IEASLKYQQN (243 aa)). Glycine 355 lines the L-glutamine pocket. Cysteine 382 acts as the Nucleophile; for glutamine hydrolysis in catalysis. L-glutamine-binding positions include 383 to 386 (LGMQ), glutamate 406, and arginine 463. Active-site residues include histidine 508 and glutamate 510.

It belongs to the CTP synthase family. In terms of assembly, homotetramer.

The catalysed reaction is UTP + L-glutamine + ATP + H2O = CTP + L-glutamate + ADP + phosphate + 2 H(+). It carries out the reaction L-glutamine + H2O = L-glutamate + NH4(+). It catalyses the reaction UTP + NH4(+) + ATP = CTP + ADP + phosphate + 2 H(+). The protein operates within pyrimidine metabolism; CTP biosynthesis via de novo pathway; CTP from UDP: step 2/2. Allosterically activated by GTP, when glutamine is the substrate; GTP has no effect on the reaction when ammonia is the substrate. The allosteric effector GTP functions by stabilizing the protein conformation that binds the tetrahedral intermediate(s) formed during glutamine hydrolysis. Inhibited by the product CTP, via allosteric rather than competitive inhibition. In terms of biological role, catalyzes the ATP-dependent amination of UTP to CTP with either L-glutamine or ammonia as the source of nitrogen. Regulates intracellular CTP levels through interactions with the four ribonucleotide triphosphates. The sequence is that of CTP synthase from Staphylococcus aureus (strain COL).